The chain runs to 946 residues: Inter-alpha-trypsin inhibitor heavy chain H2 (946 aa).

Residues 1–18 (MKRLTCFFICFFLSEVSG) form the signal peptide. The propeptide occupies 19–54 (FEIPINGLSEFVDYEDLVELAPGKFQLVAENRRYQR). One can recognise a VIT domain in the interval 56–185 (LPGESEEMME…KVQFELHYQE (130 aa)). At Ser-60 the chain carries Phosphoserine; by FAM20C. Asn-118 carries N-linked (GlcNAc...) (complex) asparagine glycosylation. A disulfide bridge connects residues Cys-261 and Cys-264. 4-carboxyglutamate occurs at positions 282 and 283. The 161-residue stretch at 308-468 (PKNILFVIDV…YDFLKRLSNE (161 aa)) folds into the VWFA domain. Residue Asn-445 is glycosylated (N-linked (GlcNAc...) asparagine). Ser-466 carries the phosphoserine; by FAM20C modification. Cys-650 and Cys-651 are oxidised to a cystine. An O-glycosylated at three sites region spans residues 665–679 (STPSWANPSPTPVIS). Residue Thr-666 is glycosylated (O-linked (GalNAc...) threonine; partial). The O-linked (GalNAc...) serine glycan is linked to Ser-673. O-linked (GalNAc...) threonine glycans are attached at residues Thr-675 and Thr-691. Asp-702 carries the post-translational modification Aspartate 1-(chondroitin 4-sulfate)-ester. The propeptide occupies 703–946 (PHFIIYLPKS…PQLYSFLKRP (244 aa)). Ser-886 bears the Phosphoserine; by FAM20C mark.

As to quaternary structure, I-alpha-I plasma protease inhibitors are assembled from one or two heavy chains (HC) and one light chain, bikunin. Inter-alpha-inhibitor (I-alpha-I) is composed of ITIH1/HC1, ITIH2/HC2 and bikunin. Post-translationally, heavy chains are linked to bikunin via chondroitin 4-sulfate esterified to the alpha-carboxyl of the C-terminal aspartate after propeptide cleavage. N- and O-glycosylated. O-glycosylated with core 1 or possibly core 8 glycans. In terms of processing, phosphorylated by FAM20C in the extracellular medium. In terms of tissue distribution, plasma.

It is found in the secreted. May act as a carrier of hyaluronan in serum or as a binding protein between hyaluronan and other matrix protein, including those on cell surfaces in tissues to regulate the localization, synthesis and degradation of hyaluronan which are essential to cells undergoing biological processes. The polypeptide is Inter-alpha-trypsin inhibitor heavy chain H2 (ITIH2) (Homo sapiens (Human)).